The following is a 304-amino-acid chain: Acetylglutamate kinase (304 aa).

Substrate-binding positions include 70–71 (GG), Arg92, and Asn185.

It belongs to the acetylglutamate kinase family. ArgB subfamily.

The protein resides in the cytoplasm. It catalyses the reaction N-acetyl-L-glutamate + ATP = N-acetyl-L-glutamyl 5-phosphate + ADP. Its pathway is amino-acid biosynthesis; L-arginine biosynthesis; N(2)-acetyl-L-ornithine from L-glutamate: step 2/4. Its function is as follows. Catalyzes the ATP-dependent phosphorylation of N-acetyl-L-glutamate. The protein is Acetylglutamate kinase of Paracoccus denitrificans (strain Pd 1222).